The chain runs to 156 residues: 6,7-dimethyl-8-ribityllumazine synthase (156 aa).

5-amino-6-(D-ribitylamino)uracil is bound by residues Phe22, 57-59 (AYE), and 81-83 (TVI). Residue 86–87 (GT) participates in (2S)-2-hydroxy-3-oxobutyl phosphate binding. The Proton donor role is filled by His89. Phe114 contacts 5-amino-6-(D-ribitylamino)uracil. A (2S)-2-hydroxy-3-oxobutyl phosphate-binding site is contributed by Arg128.

The protein belongs to the DMRL synthase family. As to quaternary structure, forms an icosahedral capsid composed of 60 subunits, arranged as a dodecamer of pentamers.

The catalysed reaction is (2S)-2-hydroxy-3-oxobutyl phosphate + 5-amino-6-(D-ribitylamino)uracil = 6,7-dimethyl-8-(1-D-ribityl)lumazine + phosphate + 2 H2O + H(+). It participates in cofactor biosynthesis; riboflavin biosynthesis; riboflavin from 2-hydroxy-3-oxobutyl phosphate and 5-amino-6-(D-ribitylamino)uracil: step 1/2. Its function is as follows. Catalyzes the formation of 6,7-dimethyl-8-ribityllumazine by condensation of 5-amino-6-(D-ribitylamino)uracil with 3,4-dihydroxy-2-butanone 4-phosphate. This is the penultimate step in the biosynthesis of riboflavin. The protein is 6,7-dimethyl-8-ribityllumazine synthase of Salmonella heidelberg (strain SL476).